Consider the following 253-residue polypeptide: MTTIDLNCNLGESFGAYKMGNDDEILPFVSSINVACGFHAGDPSVMRQTVEKAMQHNVAIGAHPGFPDLIGFGRRNMNVSANEVYDYVLYQIGALDAFVKAAGGKMQHVKPHGALYNMAATNPEIADAIAKAIYHMNSSLSLYGLANSEAFIQAAEKYNITLVQEAFADRTYKEDGTLTSRTEENALIKNEDEAIKQVLQMVKEGYVNSVNGEKVAVQAQTICLHGDGEKAVQFARKIYRTFEHNKISICAPK.

The protein belongs to the LamB/PxpA family. As to quaternary structure, forms a complex composed of PxpA, PxpB and PxpC.

The enzyme catalyses 5-oxo-L-proline + ATP + 2 H2O = L-glutamate + ADP + phosphate + H(+). Catalyzes the cleavage of 5-oxoproline to form L-glutamate coupled to the hydrolysis of ATP to ADP and inorganic phosphate. This chain is 5-oxoprolinase subunit A, found in Bacillus anthracis (strain A0248).